We begin with the raw amino-acid sequence, 166 residues long: uncharacterized protein (166 aa).

The HTH asnC-type domain maps to 3–65 (LTEKETEILE…IDWRKVDGHE (63 aa)). Positions 22-41 (LETIAKMAGIPVNEVKTIID) form a DNA-binding region, H-T-H motif.

This is an uncharacterized protein from Bacillus subtilis (strain 168).